Consider the following 265-residue polypeptide: 4-hydroxy-tetrahydrodipicolinate reductase (265 aa).

Residues 7-12 (GASGRM) and Asp33 contribute to the NAD(+) site. NADP(+) is bound at residue Arg34. NAD(+)-binding positions include 96–98 (GTT) and 120–123 (AANM). His153 serves as the catalytic Proton donor/acceptor. A (S)-2,3,4,5-tetrahydrodipicolinate-binding site is contributed by His154. Catalysis depends on Lys157, which acts as the Proton donor. 163 to 164 (GT) lines the (S)-2,3,4,5-tetrahydrodipicolinate pocket.

It belongs to the DapB family.

The protein localises to the cytoplasm. It carries out the reaction (S)-2,3,4,5-tetrahydrodipicolinate + NAD(+) + H2O = (2S,4S)-4-hydroxy-2,3,4,5-tetrahydrodipicolinate + NADH + H(+). The catalysed reaction is (S)-2,3,4,5-tetrahydrodipicolinate + NADP(+) + H2O = (2S,4S)-4-hydroxy-2,3,4,5-tetrahydrodipicolinate + NADPH + H(+). It functions in the pathway amino-acid biosynthesis; L-lysine biosynthesis via DAP pathway; (S)-tetrahydrodipicolinate from L-aspartate: step 4/4. Functionally, catalyzes the conversion of 4-hydroxy-tetrahydrodipicolinate (HTPA) to tetrahydrodipicolinate. In Burkholderia orbicola (strain AU 1054), this protein is 4-hydroxy-tetrahydrodipicolinate reductase.